We begin with the raw amino-acid sequence, 168 residues long: Translationally-controlled tumor protein homolog (168 aa).

Positions methionine 1 to phenylalanine 168 constitute a TCTP domain. Serine 78 carries the phosphoserine modification.

Belongs to the TCTP family.

It is found in the cytoplasm. Involved in calcium binding and microtubule stabilization. May be a guanine nucleotide-free chaperone (GFC). This Schizosaccharomyces pombe (strain 972 / ATCC 24843) (Fission yeast) protein is Translationally-controlled tumor protein homolog (p23fy).